A 161-amino-acid polypeptide reads, in one-letter code: Globin CTT-VIIB-10 (161 aa).

The N-terminal stretch at 1–16 is a signal peptide; the sequence is MKFFAVLALCIVGAIA. The region spanning 18–161 is the Globin domain; that stretch reads PLTADEASLV…NTFAIVVPRL (144 aa). Residues His76 and His111 each contribute to the heme b site.

The protein belongs to the globin family. In terms of assembly, homodimer.

The chain is Globin CTT-VIIB-10 (CTT-7B10) from Chironomus thummi thummi (Midge).